Here is a 618-residue protein sequence, read N- to C-terminus: DNA mismatch repair protein MutL (618 aa).

The span at 367 to 381 (EPTAAREPATPRYSG) shows a compositional bias: low complexity. A disordered region spans residues 367 to 402 (EPTAAREPATPRYSGGASGGNGGRQSAGGWPHAQPG). Gly residues predominate over residues 382–392 (GASGGNGGRQS).

The protein belongs to the DNA mismatch repair MutL/HexB family.

In terms of biological role, this protein is involved in the repair of mismatches in DNA. It is required for dam-dependent methyl-directed DNA mismatch repair. May act as a 'molecular matchmaker', a protein that promotes the formation of a stable complex between two or more DNA-binding proteins in an ATP-dependent manner without itself being part of a final effector complex. This Salmonella gallinarum (strain 287/91 / NCTC 13346) protein is DNA mismatch repair protein MutL.